A 432-amino-acid polypeptide reads, in one-letter code: Succinate--CoA ligase [GDP-forming] subunit beta, mitochondrial (432 aa).

Residues 1–37 (MAAPVGAQARKLLRDLVLRPPLLAARSQVVQLTSRRW) constitute a mitochondrion transit peptide. An ATP-grasp domain is found at 46 to 274 (KKLMSDNGVK…NAEFRQKDIF (229 aa)). Q57 contacts GTP. N6-acetyllysine is present on K73. Residue K78 is modified to N6-succinyllysine. Position 90–92 (90–92 (GRG)) interacts with GTP. 3 positions are modified to N6-acetyllysine: K111, K132, and K139. L146 contacts GTP. Position 161 is a phosphoserine (S161). N6-acetyllysine occurs at positions 200, 218, and 227. N243 and D257 together coordinate Mg(2+). K271 is modified (N6-acetyllysine). N308 is a binding site for substrate. At K338 the chain carries N6-succinyllysine. An N6-acetyllysine modification is found at K347. 365–367 (GIV) is a binding site for substrate. N6-acetyllysine occurs at positions 386 and 423.

This sequence belongs to the succinate/malate CoA ligase beta subunit family. GTP-specific subunit beta subfamily. Heterodimer of an alpha and a beta subunit. The beta subunit determines specificity for GTP. Mg(2+) serves as cofactor.

Its subcellular location is the mitochondrion. It catalyses the reaction GTP + succinate + CoA = succinyl-CoA + GDP + phosphate. It participates in carbohydrate metabolism; tricarboxylic acid cycle; succinate from succinyl-CoA (ligase route): step 1/1. In terms of biological role, GTP-specific succinyl-CoA synthetase functions in the citric acid cycle (TCA), coupling the hydrolysis of succinyl-CoA to the synthesis of GTP and thus represents the only step of substrate-level phosphorylation in the TCA. The beta subunit provides nucleotide specificity of the enzyme and binds the substrate succinate, while the binding sites for coenzyme A and phosphate are found in the alpha subunit. The protein is Succinate--CoA ligase [GDP-forming] subunit beta, mitochondrial of Bos taurus (Bovine).